Consider the following 146-residue polypeptide: Type II secretion system core protein G (146 aa).

Residues 1–9 (MKKMRKQTG) constitute a propeptide, leader sequence. Position 10 is an N-methylphenylalanine (phenylalanine 10). A helical transmembrane segment spans residues 10 to 30 (FTLLEVMVVVVILGILASFVV).

Belongs to the GSP G family. As to quaternary structure, type II secretion system is composed of four main components: the outer membrane complex, the inner membrane complex, the cytoplasmic secretion ATPase and the periplasm-spanning pseudopilus. Forms homomultimers. Interacts with EspL. Cleaved by the prepilin peptidase. Post-translationally, methylated by prepilin peptidase at the amino group of the N-terminal phenylalanine once the leader sequence is cleaved.

It is found in the cell inner membrane. Functionally, core component of the type II secretion system required for the energy-dependent secretion of extracellular factors such as proteases and toxins from the periplasm. Pseudopilin (pilin-like) protein that polymerizes to form the pseudopilus. Further polymerization triggers pseudopilus growth. This is Type II secretion system core protein G (epsG) from Vibrio cholerae serotype O1 (strain ATCC 39315 / El Tor Inaba N16961).